The chain runs to 618 residues: Putative ATP-dependent DNA helicase Q1 (618 aa).

One can recognise a Helicase ATP-binding domain in the interval 95–270 (INAVMSKEDA…KKMLGIPVAI (176 aa)). Residue 108–115 (LSTGGGKS) coordinates ATP. The short motif at 214–217 (DEVH) is the DEVH box element. In terms of domain architecture, Helicase C-terminal spans 295 to 443 (CVEKIVRTIK…NLYNMVRYAS (149 aa)). Residues Cys448, Cys466, Cys470, and Cys473 each coordinate Zn(2+). Residues 586–618 (KGRAEENNRKRKAAVTSSDEEVDVGDDDDVITL) form a disordered region. Positions 603–618 (SDEEVDVGDDDDVITL) are enriched in acidic residues.

Belongs to the helicase family. RecQ subfamily. Zn(2+) serves as cofactor.

It localises to the nucleus. The enzyme catalyses Couples ATP hydrolysis with the unwinding of duplex DNA by translocating in the 3'-5' direction.. The catalysed reaction is ATP + H2O = ADP + phosphate + H(+). Its function is as follows. DNA helicase that may play a role in the repair of DNA that is damaged by ultraviolet light or other mutagens. Exhibits a magnesium-dependent ATP-dependent DNA-helicase activity that unwinds single- and double-stranded DNA in a 3'-5' direction. This chain is Putative ATP-dependent DNA helicase Q1, found in Caenorhabditis briggsae.